A 410-amino-acid polypeptide reads, in one-letter code: LL-diaminopimelate aminotransferase (410 aa).

Tyrosine 15 and glycine 42 together coordinate substrate. Residues tyrosine 72, 108–109 (AK), tyrosine 132, asparagine 188, tyrosine 219, and 247–249 (SFS) contribute to the pyridoxal 5'-phosphate site. Positions 109, 132, and 188 each coordinate substrate. Position 250 is an N6-(pyridoxal phosphate)lysine (lysine 250). The pyridoxal 5'-phosphate site is built by arginine 258 and asparagine 293. Substrate contacts are provided by asparagine 293 and arginine 389.

Belongs to the class-I pyridoxal-phosphate-dependent aminotransferase family. LL-diaminopimelate aminotransferase subfamily. In terms of assembly, homodimer. Pyridoxal 5'-phosphate serves as cofactor.

It carries out the reaction (2S,6S)-2,6-diaminopimelate + 2-oxoglutarate = (S)-2,3,4,5-tetrahydrodipicolinate + L-glutamate + H2O + H(+). It functions in the pathway amino-acid biosynthesis; L-lysine biosynthesis via DAP pathway; LL-2,6-diaminopimelate from (S)-tetrahydrodipicolinate (aminotransferase route): step 1/1. Functionally, involved in the synthesis of meso-diaminopimelate (m-DAP or DL-DAP), required for both lysine and peptidoglycan biosynthesis. Catalyzes the direct conversion of tetrahydrodipicolinate to LL-diaminopimelate. Can also use m-DAP instead of LL-DAP as the amino-group donor. In Bacteroides fragilis (strain ATCC 25285 / DSM 2151 / CCUG 4856 / JCM 11019 / LMG 10263 / NCTC 9343 / Onslow / VPI 2553 / EN-2), this protein is LL-diaminopimelate aminotransferase.